A 440-amino-acid chain; its full sequence is Xaa-Pro dipeptidase (440 aa).

Mn(2+)-binding residues include Asp244, Asp255, His335, Glu380, and Glu419.

It belongs to the peptidase M24B family. Bacterial-type prolidase subfamily. Mn(2+) serves as cofactor.

The catalysed reaction is Xaa-L-Pro dipeptide + H2O = an L-alpha-amino acid + L-proline. Splits dipeptides with a prolyl residue in the C-terminal position. The sequence is that of Xaa-Pro dipeptidase from Shewanella denitrificans (strain OS217 / ATCC BAA-1090 / DSM 15013).